The primary structure comprises 130 residues: Large-conductance mechanosensitive channel (130 aa).

2 helical membrane-spanning segments follow: residues 11-31 (FALK…AAFG) and 70-90 (GAFI…FIFV).

Belongs to the MscL family. Homopentamer.

It localises to the cell membrane. In terms of biological role, channel that opens in response to stretch forces in the membrane lipid bilayer. May participate in the regulation of osmotic pressure changes within the cell. The sequence is that of Large-conductance mechanosensitive channel from Listeria welshimeri serovar 6b (strain ATCC 35897 / DSM 20650 / CCUG 15529 / CIP 8149 / NCTC 11857 / SLCC 5334 / V8).